Reading from the N-terminus, the 129-residue chain is NADH-quinone oxidoreductase subunit A (129 aa).

3 helical membrane-spanning segments follow: residues 14-34, 67-87, and 95-115; these read LAIH…VAAW, FLIA…FAWA, and WLGL…LVYL.

It belongs to the complex I subunit 3 family. In terms of assembly, NDH-1 is composed of 14 different subunits. Subunits NuoA, H, J, K, L, M, N constitute the membrane sector of the complex.

The protein localises to the cell inner membrane. It carries out the reaction a quinone + NADH + 5 H(+)(in) = a quinol + NAD(+) + 4 H(+)(out). Its function is as follows. NDH-1 shuttles electrons from NADH, via FMN and iron-sulfur (Fe-S) centers, to quinones in the respiratory chain. The immediate electron acceptor for the enzyme in this species is believed to be ubiquinone. Couples the redox reaction to proton translocation (for every two electrons transferred, four hydrogen ions are translocated across the cytoplasmic membrane), and thus conserves the redox energy in a proton gradient. The protein is NADH-quinone oxidoreductase subunit A of Rhodopseudomonas palustris (strain BisB5).